Consider the following 634-residue polypeptide: Serine/threonine kinase NLK (634 aa).

The Protein kinase domain maps to 240–531 (SQPDRPIGYG…VEEALQHRYL (292 aa)). Residues 246–254 (IGYGAFGVV) and Lys-269 each bind ATP. The active-site Proton acceptor is the Asp-366.

This sequence belongs to the protein kinase superfamily. CMGC Ser/Thr protein kinase family. MAP kinase subfamily. Component of the beta-catenin-lit-1 complex (also called the lit-1/wrm-1 complex or the wrm-1/lit-1 kinase complex) at least composed of lit-1 and wrm-1. Interacts with wrm-1 (via N-terminus); the interaction is direct and activates lit-1 kinase activity which leads to the phosphorylation of pop-1. This promotes pop-1 interaction with par-5 and translocation of pop-1 from the nucleus to the cytoplasm. Interacts with pop-1 (when phosphorylated on 'Ser-118' and 'Ser-127'); the interaction is dependent on the beta-catenin-lit-1 complex. It depends on Mg(2+) as a cofactor. In terms of tissue distribution, expressed in the pharynx and seam and vulval cells.

The protein resides in the cytoplasm. It is found in the cell cortex. The protein localises to the nucleus. It catalyses the reaction L-seryl-[protein] + ATP = O-phospho-L-seryl-[protein] + ADP + H(+). It carries out the reaction L-threonyl-[protein] + ATP = O-phospho-L-threonyl-[protein] + ADP + H(+). Its function is as follows. Has a role in the Wnt signaling pathway controlling the asymmetry of cell divisions during embryogenesis. Operates in the AB and EMS cell lineages influencing cell specification. Required for body wall muscle development, endoderm development, pop-1 asymmetry and T-cell division asymmetry. Component of the beta-catenin-lit-1 complex which promotes the phosphorylation, down-regulation and subcellular relocation of pop-1. Regulates plp-1 nuclear localization in embryos. Plays a role in male tail tip morphogenesis. The protein is Serine/threonine kinase NLK of Caenorhabditis elegans.